Consider the following 60-residue polypeptide: Large ribosomal subunit protein uL30 (60 aa).

This sequence belongs to the universal ribosomal protein uL30 family. In terms of assembly, part of the 50S ribosomal subunit.

The polypeptide is Large ribosomal subunit protein uL30 (Alcanivorax borkumensis (strain ATCC 700651 / DSM 11573 / NCIMB 13689 / SK2)).